The primary structure comprises 97 residues: Co-chaperonin GroES (97 aa).

This sequence belongs to the GroES chaperonin family. As to quaternary structure, heptamer of 7 subunits arranged in a ring. Interacts with the chaperonin GroEL.

It localises to the cytoplasm. In terms of biological role, together with the chaperonin GroEL, plays an essential role in assisting protein folding. The GroEL-GroES system forms a nano-cage that allows encapsulation of the non-native substrate proteins and provides a physical environment optimized to promote and accelerate protein folding. GroES binds to the apical surface of the GroEL ring, thereby capping the opening of the GroEL channel. The polypeptide is Co-chaperonin GroES (Aeromonas hydrophila subsp. hydrophila (strain ATCC 7966 / DSM 30187 / BCRC 13018 / CCUG 14551 / JCM 1027 / KCTC 2358 / NCIMB 9240 / NCTC 8049)).